Here is a 106-residue protein sequence, read N- to C-terminus: RxLR effector protein PSR1 (106 aa).

The first 20 residues, 1–20 (MRLTYVLLVAVTTLLVSCDA), serve as a signal peptide directing secretion. The RxLR-dEER motif lies at 33 to 46 (RLLRFVEAADEEER). The interval 50–106 (FSPEKLRKMLGDETYRLKKFGKWDSDGHTFDGLKHYLLLSDSSMVKLRNMYKAWLEQ) is WY domain. A Bipartite nuclear localization signal (NLS) motif is present at residues 56–69 (RKMLGDETYRLKKF).

This sequence belongs to the RxLR effector family. Interacts with host PINP1.

It is found in the secreted. The protein resides in the host nucleus. Secreted effector that possesses RNA silencing suppression activity by inhibiting the biogenesis of small RNAs in the host plant to promote enhanced susceptibility of host to the pathogen during infection. Interferes with secondary siRNA production by associating with host nuclear protein PINP1 that acts as a regulator of the accumulation of both microRNAs and endogenous small interfering RNAs. This chain is RxLR effector protein PSR1, found in Phytophthora sojae (Soybean stem and root rot agent).